A 140-amino-acid polypeptide reads, in one-letter code: Protein KRTCAP2 homolog (140 aa).

4 helical membrane passes run leucine 11–cysteine 31, leucine 40–valine 60, alanine 74–valine 94, and cysteine 98–isoleucine 118.

Belongs to the KRTCAP2 family. In terms of assembly, component of the oligosaccharyltransferase (OST) complex.

The protein resides in the membrane. Functionally, subunit of the oligosaccharyl transferase (OST) complex that catalyzes the initial transfer of a defined glycan (Glc(3)Man(9)GlcNAc(2) in eukaryotes) from the lipid carrier dolichol-pyrophosphate to an asparagine residue within an Asn-X-Ser/Thr consensus motif in nascent polypeptide chains, the first step in protein N-glycosylation. N-glycosylation occurs cotranslationally and the complex associates with the Sec61 complex at the channel-forming translocon complex that mediates protein translocation across the endoplasmic reticulum (ER). All subunits are required for a maximal enzyme activity. This chain is Protein KRTCAP2 homolog, found in Drosophila pseudoobscura pseudoobscura (Fruit fly).